A 634-amino-acid chain; its full sequence is 1-deoxy-D-xylulose-5-phosphate synthase (634 aa).

Thiamine diphosphate-binding positions include histidine 74 and 115–117 (AHS). Aspartate 146 serves as a coordination point for Mg(2+). Thiamine diphosphate-binding positions include 147–148 (GA), asparagine 176, tyrosine 283, and glutamate 365. A Mg(2+)-binding site is contributed by asparagine 176.

The protein belongs to the transketolase family. DXPS subfamily. Homodimer. Requires Mg(2+) as cofactor. It depends on thiamine diphosphate as a cofactor.

It carries out the reaction D-glyceraldehyde 3-phosphate + pyruvate + H(+) = 1-deoxy-D-xylulose 5-phosphate + CO2. Its pathway is metabolic intermediate biosynthesis; 1-deoxy-D-xylulose 5-phosphate biosynthesis; 1-deoxy-D-xylulose 5-phosphate from D-glyceraldehyde 3-phosphate and pyruvate: step 1/1. Functionally, catalyzes the acyloin condensation reaction between C atoms 2 and 3 of pyruvate and glyceraldehyde 3-phosphate to yield 1-deoxy-D-xylulose-5-phosphate (DXP). The polypeptide is 1-deoxy-D-xylulose-5-phosphate synthase (Burkholderia orbicola (strain MC0-3)).